Reading from the N-terminus, the 115-residue chain is Parathyroid hormone (115 aa).

The N-terminal stretch at 1–25 is a signal peptide; the sequence is MMSAKDTVKVMVVMLAICFLARSDG. The propeptide occupies 26–31; the sequence is KPIKKR. Residues 51 to 69 form an important for receptor binding region; it reads RVEWLRKKLQDVHNFVALG. Positions 75–98 are disordered; the sequence is RDGGSQRPRKKEDNVLVESHQKSL.

It belongs to the parathyroid hormone family. Interacts with PTH1R (via N-terminal extracellular domain).

It localises to the secreted. Its function is as follows. Parathyroid hormone elevates calcium level by dissolving the salts in bone and preventing their renal excretion. Acts by binding to its receptor, PTH1R, activating G protein-coupled receptor signaling. Stimulates [1-14C]-2-deoxy-D-glucose (2DG) transport and glycogen synthesis in osteoblastic cells. This Sus scrofa (Pig) protein is Parathyroid hormone (PTH).